We begin with the raw amino-acid sequence, 559 residues long: Formate--tetrahydrofolate ligase (559 aa).

68–75 contacts ATP; that stretch reads TPAGEGKS.

Belongs to the formate--tetrahydrofolate ligase family.

The catalysed reaction is (6S)-5,6,7,8-tetrahydrofolate + formate + ATP = (6R)-10-formyltetrahydrofolate + ADP + phosphate. It functions in the pathway one-carbon metabolism; tetrahydrofolate interconversion. The chain is Formate--tetrahydrofolate ligase from Lactobacillus gasseri (strain ATCC 33323 / DSM 20243 / BCRC 14619 / CIP 102991 / JCM 1131 / KCTC 3163 / NCIMB 11718 / NCTC 13722 / AM63).